A 492-amino-acid polypeptide reads, in one-letter code: GTPase Obg (492 aa).

Positions 2 to 159 (PRFVDRVVIH…RELTLELKTV (158 aa)) constitute an Obg domain. Positions 160 to 340 (ADVGLIGFPS…LIFGLWQMIS (181 aa)) constitute an OBG-type G domain. GTP is bound by residues 166–173 (GFPSAGKS), 191–195 (FTTLV), 212–215 (DVPG), 292–295 (NKID), and 321–323 (STV). 2 residues coordinate Mg(2+): Ser173 and Thr193. The 81-residue stretch at 358–438 (PVPVDDSGFR…IGDMTFDWEP (81 aa)) folds into the OCT domain. Positions 449–492 (SGRGTDARLERTERVGAAERKAARRQRRTGDDAERGTTERGENT) are disordered. 2 stretches are compositionally biased toward basic and acidic residues: residues 453–469 (TDAR…AERK) and 476–492 (RTGD…GENT).

The protein belongs to the TRAFAC class OBG-HflX-like GTPase superfamily. OBG GTPase family. In terms of assembly, monomer. Mg(2+) is required as a cofactor.

The protein resides in the cytoplasm. An essential GTPase which binds GTP, GDP and possibly (p)ppGpp with moderate affinity, with high nucleotide exchange rates and a fairly low GTP hydrolysis rate. Plays a role in control of the cell cycle, stress response, ribosome biogenesis and in those bacteria that undergo differentiation, in morphogenesis control. This chain is GTPase Obg, found in Mycobacterium avium (strain 104).